Consider the following 305-residue polypeptide: Probable lipid kinase YegS-like (305 aa).

A DAGKc domain is found at Met1 to Leu129. Residues Thr39, Gly65 to Asp71, and Thr92 each bind ATP. Positions 210, 213, and 215 each coordinate Mg(2+). The active-site Proton acceptor is Glu268.

The protein belongs to the diacylglycerol/lipid kinase family. YegS lipid kinase subfamily. Requires Mg(2+) as cofactor. Ca(2+) is required as a cofactor.

It is found in the cytoplasm. Its function is as follows. Probably phosphorylates lipids; the in vivo substrate is unknown. The polypeptide is Probable lipid kinase YegS-like (Pseudomonas savastanoi pv. phaseolicola (strain 1448A / Race 6) (Pseudomonas syringae pv. phaseolicola (strain 1448A / Race 6))).